We begin with the raw amino-acid sequence, 336 residues long: 3-isopropylmalate dehydrogenase (336 aa).

Positions 87, 97, 121, and 211 each coordinate substrate. Asp211, Asp235, and Asp239 together coordinate Mg(2+). 271 to 283 (GSAPDIAGQGIAD) is a binding site for NAD(+).

It belongs to the isocitrate and isopropylmalate dehydrogenases family. LeuB type 2 subfamily. As to quaternary structure, homodimer. Requires Mg(2+) as cofactor. It depends on Mn(2+) as a cofactor.

Its subcellular location is the cytoplasm. The enzyme catalyses (2R,3S)-3-isopropylmalate + NAD(+) = 4-methyl-2-oxopentanoate + CO2 + NADH. The protein operates within amino-acid biosynthesis; L-leucine biosynthesis; L-leucine from 3-methyl-2-oxobutanoate: step 3/4. Functionally, catalyzes the oxidation of 3-carboxy-2-hydroxy-4-methylpentanoate (3-isopropylmalate) to 3-carboxy-4-methyl-2-oxopentanoate. The product decarboxylates to 4-methyl-2 oxopentanoate. This is 3-isopropylmalate dehydrogenase from Mycobacterium sp. (strain JLS).